We begin with the raw amino-acid sequence, 373 residues long: Indole glucosinolate O-methyltransferase 1 (373 aa).

S-adenosyl-L-homocysteine contacts are provided by Gly217, Asp240, Asp260, Met261, and Lys274. The Proton acceptor role is filled by His278.

This sequence belongs to the class I-like SAM-binding methyltransferase superfamily. Cation-independent O-methyltransferase family. Interacts with B'GAMMA.

The protein operates within secondary metabolite biosynthesis. Functionally, involved in indole glucosinolate biosynthesis. Catalyzes methoxylation reactions of the glucosinolate indole ring. Converts the hydroxy intermediates 4-hydroxy-indol-3-yl-methylglucosinolate (4OH-I3M) and 1-hydroxy-indol-3-yl-methylglucosinolate (1OH-I3M) to 4-methoxy-indol-3-yl-methylglucosinolate (4MO-I3M) and 1-methoxy-indol-3-yl-methylglucosinolate (1MO-I3M), respectively. The polypeptide is Indole glucosinolate O-methyltransferase 1 (Arabidopsis thaliana (Mouse-ear cress)).